The primary structure comprises 457 residues: Carboxypeptidase N catalytic chain (457 aa).

The signal sequence occupies residues 1–23; that stretch reads MPDLPSAFLPLLLLSKFVTPVTF. A Peptidase M14 domain is found at 24 to 338; sequence RHHRYDDLVR…EALIQFLEQV (315 aa). C42 and C104 are disulfide-bonded. 3 residues coordinate Zn(2+): H86, E89, and H216. A disulfide bridge connects residues C271 and C311. E308 functions as the Proton donor/acceptor in the catalytic mechanism. Residues T400, T402, and T409 are each glycosylated (O-linked (GalNAc...) threonine). A disordered region spans residues 418 to 457; it reads SSSQVYPVQRAPGRGQGGRAKQPRTSRKKDPATKRHRGPA.

It belongs to the peptidase M14 family. As to quaternary structure, tetramer of two catalytic chains and two glycosylated inactive chains. Zn(2+) serves as cofactor. In terms of tissue distribution, mainly expressed in liver. Also detected in lung, stomach, intestine, spleen and kidney.

The protein resides in the secreted. It is found in the extracellular space. It catalyses the reaction Release of a C-terminal basic amino acid, preferentially lysine.. Protects the body from potent vasoactive and inflammatory peptides containing C-terminal Arg or Lys (such as kinins or anaphylatoxins) which are released into the circulation. The chain is Carboxypeptidase N catalytic chain (Cpn1) from Mus musculus (Mouse).